The primary structure comprises 653 residues: Testicular spindle-associated protein SHCBP1L (653 aa).

Residues 1–65 (MASGSKASVP…PVKGKAGRET (65 aa)) are disordered. Ser8 is subject to Phosphoserine. The segment covering 28–41 (SAVSGDTAAATTLK) has biased composition (polar residues). Over residues 46 to 56 (PVRSVVASPRP) the composition is skewed to low complexity. Residue Ser53 is modified to Phosphoserine. Residues 299-326 (IAQRFKKTLEKYKNKRVELIEYQSNIKE) are a coiled coil. 4 PbH1 repeats span residues 493-514 (SGHMTLENCILKCEGTGVCVLT), 515-537 (GAALTITDSEITGAQGAGVELYP), 538-571 (GSIAILERNEIHHCNNLRTSNSSKSTLGGVNMKV), and 574-596 (APKLKMTNNHIYSNKGYGVSILQ). Residue Lys570 is modified to N6-acetyllysine. Lys645 bears the N6-acetyllysine mark.

As to quaternary structure, interacts with HSPA2; this interaction may promote the recruitment of HSPA2 to the spindle. In terms of tissue distribution, expressed in spermatocytes and elongating spermatids inside the seminiferous tubules (at protein level). Testis-specific.

It is found in the cytoplasm. It localises to the cytoskeleton. The protein resides in the spindle. Its function is as follows. Testis-specific spindle-associated factor that plays a role in spermatogenesis. In association with HSPA2, participates in the maintenance of spindle integrity during meiosis in male germ cells. This Homo sapiens (Human) protein is Testicular spindle-associated protein SHCBP1L.